Consider the following 175-residue polypeptide: Adenine phosphoribosyltransferase (175 aa).

It belongs to the purine/pyrimidine phosphoribosyltransferase family. As to quaternary structure, homodimer.

The protein localises to the cytoplasm. The catalysed reaction is AMP + diphosphate = 5-phospho-alpha-D-ribose 1-diphosphate + adenine. It functions in the pathway purine metabolism; AMP biosynthesis via salvage pathway; AMP from adenine: step 1/1. Catalyzes a salvage reaction resulting in the formation of AMP, that is energically less costly than de novo synthesis. The chain is Adenine phosphoribosyltransferase from Parvibaculum lavamentivorans (strain DS-1 / DSM 13023 / NCIMB 13966).